The chain runs to 68 residues: Protein SlyX homolog (68 aa).

It belongs to the SlyX family.

This Pseudomonas syringae pv. tomato (strain ATCC BAA-871 / DC3000) protein is Protein SlyX homolog.